We begin with the raw amino-acid sequence, 2194 residues long: Genome polyprotein (2194 aa).

A disordered region spans residues 1–20 (MGAQVSRQQTGTHENANVAT). The N-myristoyl glycine; by host moiety is linked to residue glycine 2. The Cytoplasmic portion of the chain corresponds to 2 to 1509 (GAQVSRQQTG…HISRAFIALQ (1508 aa)). Residues 558-574 (LPEQAATTQIGEIVKTV) form an amphipathic alpha-helix region. Active-site for protease 2A activity residues include histidine 885 and aspartate 903. Positions 920 and 922 each coordinate Zn(2+). Cysteine 974 serves as the catalytic For protease 2A activity. Cysteine 980 and histidine 982 together coordinate Zn(2+). The tract at residues 1114 to 1186 (SDSWLKKFTE…EHSCPNSEXQ (73 aa)) is membrane-binding. The segment at 1114-1252 (SDSWLKKFTE…SPGTGKSVAS (139 aa)) is oligomerization. An RNA-binding region spans residues 1135 to 1139 (AQKID). Residues 1218-1374 (ERKINNYIQF…ESYKDGVRLD (157 aa)) form the SF3 helicase domain. An ATP-binding site is contributed by 1242 to 1249 (GSPGTGKS). Zn(2+) is bound by residues cysteine 1382, cysteine 1395, and cysteine 1400. Residues 1382–1400 (CNPEKCRPTNYKKCCPLIC) form a C4-type; degenerate zinc finger. Residues 1427–1434 (EYRIRNST) form an RNA-binding region. The interval 1438–1443 (LEALFQ) is oligomerization. Residues 1510–1525 (AITTFVSIAGVVYVIY) lie within the membrane without spanning it. Topologically, residues 1526 to 2194 (KLFAGIQGPY…SLRRKWLDSF (669 aa)) are cytoplasmic. Tyrosine 1535 carries the O-(5'-phospho-RNA)-tyrosine modification. The region spanning 1555–1733 (GPSLDFAQAI…FAAMLLQNYF (179 aa)) is the Peptidase C3 domain. Active-site for protease 3C activity residues include histidine 1594, glutamate 1625, and cysteine 1701. The 116-residue stretch at 1960–2075 (GKIFAFDYTG…SYPHEIDPGL (116 aa)) folds into the RdRp catalytic domain. The Mg(2+) site is built by aspartate 1966 and aspartate 2061.

It belongs to the picornaviruses polyprotein family. As to quaternary structure, interacts with capsid protein VP1 and capsid protein VP3 to form heterotrimeric protomers. Interacts with capsid protein VP0, and capsid protein VP3 to form heterotrimeric protomers. Five protomers subsequently associate to form pentamers which serve as building blocks for the capsid. Interacts with capsid protein VP2, capsid protein VP3 and capsid protein VP4 following cleavage of capsid protein VP0. In terms of assembly, interacts with capsid protein VP1 and capsid protein VP3 in the mature capsid. As to quaternary structure, interacts with capsid protein VP0 and capsid protein VP1 to form heterotrimeric protomers. Five protomers subsequently associate to form pentamers which serve as building blocks for the capsid. Interacts with capsid protein VP4 in the mature capsid. Interacts with protein 2C; this interaction may be important for virion morphogenesis. Interacts with capsid protein VP1 and capsid protein VP3. In terms of assembly, homodimer. As to quaternary structure, homohexamer; forms a hexameric ring structure with 6-fold symmetry characteristic of AAA+ ATPases. Interacts (via N-terminus) with host RTN3 (via reticulon domain); this interaction is important for viral replication. Interacts with capsid protein VP3; this interaction may be important for virion morphogenesis. Interacts with protein 3CD. In terms of assembly, homodimer. Interacts with host GBF1. Interacts (via GOLD domain) with host ACBD3 (via GOLD domain); this interaction allows the formation of a viral protein 3A/ACBD3 heterotetramer with a 2:2 stoichiometry, which will stimulate the recruitment of host PI4KB in order to synthesize PI4P at the viral RNA replication sites. As to quaternary structure, interacts with RNA-directed RNA polymerase. Interacts with protein 3AB and with RNA-directed RNA polymerase. In terms of assembly, interacts with Viral protein genome-linked and with protein 3CD. Mg(2+) is required as a cofactor. Post-translationally, specific enzymatic cleavages in vivo by the viral proteases yield processing intermediates and the mature proteins. In terms of processing, myristoylation is required for the formation of pentamers during virus assembly. Further assembly of 12 pentamers and a molecule of genomic RNA generates the provirion. During virion maturation, immature virions are rendered infectious following cleavage of VP0 into VP4 and VP2. This maturation seems to be an autocatalytic event triggered by the presence of RNA in the capsid and it is followed by a conformational change infectious virion. Post-translationally, myristoylation is required during RNA encapsidation and formation of the mature virus particle. In terms of processing, VPg is uridylylated by the polymerase into VPg-pUpU. This acts as a nucleotide-peptide primer for the genomic RNA replication.

It is found in the virion. It localises to the host cytoplasm. The protein resides in the host cytoplasmic vesicle membrane. Its subcellular location is the host nucleus. The enzyme catalyses a ribonucleoside 5'-triphosphate + H2O = a ribonucleoside 5'-diphosphate + phosphate + H(+). The catalysed reaction is Selective cleavage of Tyr-|-Gly bond in the picornavirus polyprotein.. It catalyses the reaction RNA(n) + a ribonucleoside 5'-triphosphate = RNA(n+1) + diphosphate. It carries out the reaction Selective cleavage of Gln-|-Gly bond in the poliovirus polyprotein. In other picornavirus reactions Glu may be substituted for Gln, and Ser or Thr for Gly.. With respect to regulation, replication or transcription is subject to high level of random mutations by the nucleotide analog ribavirin. In terms of biological role, forms an icosahedral capsid of pseudo T=3 symmetry with capsid proteins VP2 and VP3. The capsid is 300 Angstroms in diameter, composed of 60 copies of each capsid protein and enclosing the viral positive strand RNA genome. Capsid protein VP1 mainly forms the vertices of the capsid. Capsid protein VP1 interacts with host cell receptor to provide virion attachment to target host cells. This attachment induces virion internalization. Tyrosine kinases are probably involved in the entry process. After binding to its receptor, the capsid undergoes conformational changes. Capsid protein VP1 N-terminus (that contains an amphipathic alpha-helix) and capsid protein VP4 are externalized. Together, they shape a pore in the host membrane through which viral genome is translocated to host cell cytoplasm. Its function is as follows. Forms an icosahedral capsid of pseudo T=3 symmetry with capsid proteins VP2 and VP3. The capsid is 300 Angstroms in diameter, composed of 60 copies of each capsid protein and enclosing the viral positive strand RNA genome. Lies on the inner surface of the capsid shell. After binding to the host receptor, the capsid undergoes conformational changes. Capsid protein VP4 is released, Capsid protein VP1 N-terminus is externalized, and together, they shape a pore in the host membrane through which the viral genome is translocated into the host cell cytoplasm. Functionally, component of immature procapsids, which is cleaved into capsid proteins VP4 and VP2 after maturation. Allows the capsid to remain inactive before the maturation step. In terms of biological role, cysteine protease that cleaves viral polyprotein and specific host proteins. It is responsible for the autocatalytic cleavage between the P1 and P2 regions, which is the first cleavage occurring in the polyprotein. Also cleaves the host translation initiation factor EIF4G1, in order to shut down the capped cellular mRNA translation. Inhibits the host nucleus-cytoplasm protein and RNA trafficking by cleaving host members of the nuclear pores. Counteracts stress granule formation probably by antagonizing its assembly or promoting its dissassembly. Its function is as follows. Plays an essential role in the virus replication cycle by acting as a viroporin. Creates a pore in the host endoplasmic reticulum and as a consequence releases Ca2+ in the cytoplasm of infected cell. In turn, high levels of cytoplasmic calcium may trigger membrane trafficking and transport of viral ER-associated proteins to viroplasms, sites of viral genome replication. Induces and associates with structural rearrangements of intracellular membranes. Displays RNA-binding, nucleotide binding and NTPase activities. May play a role in virion morphogenesis and viral RNA encapsidation by interacting with the capsid protein VP3. Functionally, localizes the viral replication complex to the surface of membranous vesicles. Together with protein 3CD binds the Cis-Active RNA Element (CRE) which is involved in RNA synthesis initiation. Acts as a cofactor to stimulate the activity of 3D polymerase, maybe through a nucleid acid chaperone activity. In terms of biological role, localizes the viral replication complex to the surface of membranous vesicles. It inhibits host cell endoplasmic reticulum-to-Golgi apparatus transport and causes the disassembly of the Golgi complex, possibly through GBF1 interaction. This would result in depletion of MHC, trail receptors and IFN receptors at the host cell surface. Plays an essential role in viral RNA replication by recruiting ACBD3 and PI4KB at the viral replication sites, thereby allowing the formation of the rearranged membranous structures where viral replication takes place. Its function is as follows. Acts as a primer for viral RNA replication and remains covalently bound to viral genomic RNA. VPg is uridylylated prior to priming replication into VPg-pUpU. The oriI viral genomic sequence may act as a template for this. The VPg-pUpU is then used as primer on the genomic RNA poly(A) by the RNA-dependent RNA polymerase to replicate the viral genome. During genome replication, the VPg-RNA linkage is removed by the host TDP2, thereby accelerating replication. During the late stage of the replication cycle, host TDP2 is excluded from sites of viral RNA synthesis and encapsidation, allowing for the generation of progeny virions. Involved in the viral replication complex and viral polypeptide maturation. It exhibits protease activity with a specificity and catalytic efficiency that is different from protease 3C. Protein 3CD lacks polymerase activity. The 3C domain in the context of protein 3CD may have an RNA binding activity. Protein 3CD binds to the 5'UTR of the viral genome. Functionally, replicates the viral genomic RNA on the surface of intracellular membranes. May form linear arrays of subunits that propagate along a strong head-to-tail interaction called interface-I. Covalently attaches UMP to a tyrosine of VPg, which is used to prime RNA synthesis. The positive stranded RNA genome is first replicated at virus induced membranous vesicles, creating a dsRNA genomic replication form. This dsRNA is then used as template to synthesize positive stranded RNA genomes. ss(+)RNA genomes are either translated, replicated or encapsidated. In terms of biological role, major viral protease that mediates proteolytic processing of the polyprotein. Cleaves host EIF5B, contributing to host translation shutoff. Also cleaves host PABPC1, contributing to host translation shutoff. Cleaves host NLRP1, triggers host N-glycine-mediated degradation of the autoinhibitory NLRP1 N-terminal fragment. The chain is Genome polyprotein from Homo sapiens (Human).